The following is a 196-amino-acid chain: Imidazole glycerol phosphate synthase subunit HisH (196 aa).

The Glutamine amidotransferase type-1 domain maps to 2–196 (KVAVIKYNAG…ERIIKNFLEL (195 aa)). The active-site Nucleophile is the Cys-77. Catalysis depends on residues His-178 and Glu-180.

As to quaternary structure, heterodimer of HisH and HisF.

The protein localises to the cytoplasm. The catalysed reaction is 5-[(5-phospho-1-deoxy-D-ribulos-1-ylimino)methylamino]-1-(5-phospho-beta-D-ribosyl)imidazole-4-carboxamide + L-glutamine = D-erythro-1-(imidazol-4-yl)glycerol 3-phosphate + 5-amino-1-(5-phospho-beta-D-ribosyl)imidazole-4-carboxamide + L-glutamate + H(+). It carries out the reaction L-glutamine + H2O = L-glutamate + NH4(+). It participates in amino-acid biosynthesis; L-histidine biosynthesis; L-histidine from 5-phospho-alpha-D-ribose 1-diphosphate: step 5/9. IGPS catalyzes the conversion of PRFAR and glutamine to IGP, AICAR and glutamate. The HisH subunit catalyzes the hydrolysis of glutamine to glutamate and ammonia as part of the synthesis of IGP and AICAR. The resulting ammonia molecule is channeled to the active site of HisF. In Bacteroides fragilis (strain ATCC 25285 / DSM 2151 / CCUG 4856 / JCM 11019 / LMG 10263 / NCTC 9343 / Onslow / VPI 2553 / EN-2), this protein is Imidazole glycerol phosphate synthase subunit HisH.